A 376-amino-acid chain; its full sequence is Alanine racemase (376 aa).

Lys-40 serves as the catalytic Proton acceptor; specific for D-alanine. Lys-40 carries the post-translational modification N6-(pyridoxal phosphate)lysine. Arg-138 lines the substrate pocket. The active-site Proton acceptor; specific for L-alanine is the Tyr-270. A substrate-binding site is contributed by Met-317.

The protein belongs to the alanine racemase family. Pyridoxal 5'-phosphate serves as cofactor.

It catalyses the reaction L-alanine = D-alanine. The protein operates within amino-acid biosynthesis; D-alanine biosynthesis; D-alanine from L-alanine: step 1/1. Functionally, catalyzes the interconversion of L-alanine and D-alanine. May also act on other amino acids. The protein is Alanine racemase (alr) of Lactobacillus acidophilus (strain ATCC 700396 / NCK56 / N2 / NCFM).